Consider the following 147-residue polypeptide: UPF0735 ACT domain-containing protein YszB (147 aa).

Positions 70 to 145 constitute an ACT domain; the sequence is TLFFHLEDRS…FVEKVEILGS (76 aa).

It belongs to the UPF0735 family.

The polypeptide is UPF0735 ACT domain-containing protein YszB (yszB) (Bacillus subtilis (strain 168)).